Consider the following 278-residue polypeptide: MATH domain and coiled-coil domain-containing protein At1g31400 (278 aa).

The MATH domain maps to 6-131 (EKRITWTIKN…SGQVKIVAEV (126 aa)). Positions 232-267 (KLDWLEKKLKEVGKTRMQQLEQNLKDLKESLCWSSD) form a coiled coil.

This is MATH domain and coiled-coil domain-containing protein At1g31400 from Arabidopsis thaliana (Mouse-ear cress).